We begin with the raw amino-acid sequence, 166 residues long: Ribosome maturation factor RimM (166 aa).

The PRC barrel domain maps to aspartate 91–leucine 163.

It belongs to the RimM family. In terms of assembly, binds ribosomal protein uS19.

The protein localises to the cytoplasm. In terms of biological role, an accessory protein needed during the final step in the assembly of 30S ribosomal subunit, possibly for assembly of the head region. Essential for efficient processing of 16S rRNA. May be needed both before and after RbfA during the maturation of 16S rRNA. It has affinity for free ribosomal 30S subunits but not for 70S ribosomes. The polypeptide is Ribosome maturation factor RimM (Corynebacterium diphtheriae (strain ATCC 700971 / NCTC 13129 / Biotype gravis)).